Consider the following 326-residue polypeptide: Apolipoprotein F (326 aa).

Residues 1-35 form the signal peptide; sequence MTGLCGYSAPDMRGLRLIMIPVELLLCYLLLHPVD. Positions 36–164 are excised as a propeptide; it reads ATSYGKQTNV…EQQSTGRVGR (129 aa). Asn118 is a glycosylation site (N-linked (GlcNAc...) asparagine). The O-linked (GalNAc...) threonine glycan is linked to Thr274. A Phosphoserine modification is found at Ser323.

Belongs to the apolipoprotein F family. In terms of processing, O-glycosylated with core 1 or possibly core 8 glycans. As to expression, expressed by the liver and secreted in plasma.

The protein localises to the secreted. In terms of biological role, minor apolipoprotein that associates with LDL. Inhibits cholesteryl ester transfer protein (CETP) activity and appears to be an important regulator of cholesterol transport. Also associates to a lesser degree with VLDL, Apo-AI and Apo-AII. This Homo sapiens (Human) protein is Apolipoprotein F (APOF).